The chain runs to 150 residues: Large ribosomal subunit protein bL9 (150 aa).

It belongs to the bacterial ribosomal protein bL9 family.

Functionally, binds to the 23S rRNA. The sequence is that of Large ribosomal subunit protein bL9 from Herminiimonas arsenicoxydans.